A 64-amino-acid chain; its full sequence is Conotoxin Ca5.3 (64 aa).

The signal sequence occupies residues 1–22 (MRCVPVFIILLLLIASAPGVDA). Residues 23-48 (QPKTKYNAPLTSLHDNAKGILQEHWN) constitute a propeptide that is removed on maturation. Ile-61 carries the isoleucine amide modification.

This sequence belongs to the conotoxin T superfamily. Contains 2 disulfide bonds that can be either 'C1-C3, C2-C4' or 'C1-C4, C2-C3', since these disulfide connectivities have been observed for conotoxins with cysteine framework V (for examples, see AC P0DQQ7 and AC P81755). In terms of tissue distribution, expressed by the venom duct.

The protein resides in the secreted. In Conus caracteristicus (Characteristic cone), this protein is Conotoxin Ca5.3.